The following is a 110-amino-acid chain: UPF0060 membrane protein Bcen_0802 (110 aa).

Transmembrane regions (helical) follow at residues A9–L29, P34–L54, Y66–L86, and R88–P108.

The protein belongs to the UPF0060 family.

Its subcellular location is the cell inner membrane. In Burkholderia orbicola (strain AU 1054), this protein is UPF0060 membrane protein Bcen_0802.